The following is a 597-amino-acid chain: Elongation factor 4 (597 aa).

In terms of domain architecture, tr-type G spans 2–184; that stretch reads KNIRNFSIIA…EIVHKIPAPE (183 aa). GTP-binding positions include 14 to 19 and 131 to 134; these read DHGKST and NKID.

The protein belongs to the TRAFAC class translation factor GTPase superfamily. Classic translation factor GTPase family. LepA subfamily.

It is found in the cell inner membrane. It carries out the reaction GTP + H2O = GDP + phosphate + H(+). Functionally, required for accurate and efficient protein synthesis under certain stress conditions. May act as a fidelity factor of the translation reaction, by catalyzing a one-codon backward translocation of tRNAs on improperly translocated ribosomes. Back-translocation proceeds from a post-translocation (POST) complex to a pre-translocation (PRE) complex, thus giving elongation factor G a second chance to translocate the tRNAs correctly. Binds to ribosomes in a GTP-dependent manner. The protein is Elongation factor 4 of Actinobacillus succinogenes (strain ATCC 55618 / DSM 22257 / CCUG 43843 / 130Z).